A 207-amino-acid polypeptide reads, in one-letter code: Transcriptional regulatory protein RcsA (207 aa).

Residues Ile131–Asp196 enclose the HTH luxR-type domain. Residues Thr155–Gly174 constitute a DNA-binding region (H-T-H motif).

The protein belongs to the RcsA family. As to quaternary structure, interacts with RcsB.

Component of the Rcs signaling system, which controls transcription of numerous genes. Binds, with RcsB, to the RcsAB box to regulate expression of genes. The chain is Transcriptional regulatory protein RcsA from Salmonella typhimurium (strain LT2 / SGSC1412 / ATCC 700720).